Consider the following 235-residue polypeptide: Voltage-gated hydrogen channel 1 (235 aa).

Residues 1-62 (MSRYLKHFTV…VMKKLFSSRR (62 aa)) are Cytoplasmic-facing. The chain crosses the membrane as a helical span at residues 63 to 83 (FQIVIVFLVIVDALLVLGELL). The Extracellular portion of the chain corresponds to 84 to 100 (MDLKIIHPDKYHIAPKV). Residues 101 to 123 (FHYLSLSILTIFLVEVGFKIFVY) traverse the membrane as a helical segment. Residues 124 to 131 (GREFFHHK) lie on the Cytoplasmic side of the membrane. A helical transmembrane segment spans residues 132–152 (FEVLDSIVVVVSFILDLVLLF). Over 153 to 159 (REHEFEA) the chain is Extracellular. Residues 160–180 (VGLLILLRLWRVARIINGIIL) form a helical membrane-spanning segment. The Cytoplasmic segment spans residues 181–235 (SVKTRSEQQVSKLKQVNLKLATKVEQLQHSCVEKEQEIERLTRMLKQHGLLSEQT). Residues 187 to 228 (EQQVSKLKQVNLKLATKVEQLQHSCVEKEQEIERLTRMLKQH) adopt a coiled-coil conformation.

It belongs to the hydrogen channel family. Homodimer.

It localises to the membrane. The protein resides in the cell membrane. In terms of biological role, mediates the voltage-dependent proton permeability of excitable membranes. Forms a proton-selective channel through which protons may pass in accordance with their electrochemical gradient. The sequence is that of Voltage-gated hydrogen channel 1 (HVCN1) from Gallus gallus (Chicken).